The primary structure comprises 396 residues: Elongation factor Tu (396 aa).

The tr-type G domain maps to 10–205; the sequence is KPHVNIGTIG…AVDESIPDPV (196 aa). The interval 19 to 26 is G1; sequence GHVDHGKT. Position 19-26 (19-26) interacts with GTP; sequence GHVDHGKT. Threonine 26 contacts Mg(2+). The G2 stretch occupies residues 62–66; it reads GITIN. Residues 83–86 form a G3 region; the sequence is DAPG. GTP-binding positions include 83–87 and 138–141; these read DAPGH and NKSD. A G4 region spans residues 138 to 141; the sequence is NKSD. The interval 175-177 is G5; sequence SAL.

This sequence belongs to the TRAFAC class translation factor GTPase superfamily. Classic translation factor GTPase family. EF-Tu/EF-1A subfamily. Monomer.

The protein resides in the cytoplasm. The enzyme catalyses GTP + H2O = GDP + phosphate + H(+). Functionally, GTP hydrolase that promotes the GTP-dependent binding of aminoacyl-tRNA to the A-site of ribosomes during protein biosynthesis. The polypeptide is Elongation factor Tu (Mycobacterium marinum (strain ATCC BAA-535 / M)).